Reading from the N-terminus, the 460-residue chain is tRNA modification GTPase MnmE (460 aa).

Residues arginine 22, glutamate 87, and arginine 126 each coordinate (6S)-5-formyl-5,6,7,8-tetrahydrofolate. The 160-residue stretch at 222 to 381 (GLKTAIIGKP…LENTIYNLVF (160 aa)) folds into the TrmE-type G domain. Asparagine 232 provides a ligand contact to K(+). GTP is bound by residues 232–237 (NVGKSS), 251–257 (TDIPGTT), and 276–279 (DTAG). Residue serine 236 coordinates Mg(2+). Positions 251, 253, and 256 each coordinate K(+). Threonine 257 provides a ligand contact to Mg(2+). A (6S)-5-formyl-5,6,7,8-tetrahydrofolate-binding site is contributed by lysine 460.

This sequence belongs to the TRAFAC class TrmE-Era-EngA-EngB-Septin-like GTPase superfamily. TrmE GTPase family. In terms of assembly, homodimer. Heterotetramer of two MnmE and two MnmG subunits. Requires K(+) as cofactor.

It is found in the cytoplasm. Its function is as follows. Exhibits a very high intrinsic GTPase hydrolysis rate. Involved in the addition of a carboxymethylaminomethyl (cmnm) group at the wobble position (U34) of certain tRNAs, forming tRNA-cmnm(5)s(2)U34. The sequence is that of tRNA modification GTPase MnmE from Thermoanaerobacter pseudethanolicus (strain ATCC 33223 / 39E) (Clostridium thermohydrosulfuricum).